Consider the following 750-residue polypeptide: MMRQYELVERVQRYKPDVNEALLNKAYVYAMQKHGSQKRASGDPYFSHPLEVAAILTDMHLDEATIAIALLHDTIEDTTATRQEIDQLFGPEIGKLVEGLTKLKKLDLVSKKAVQAENLRKLLLAISEDVRVLLVKLADRLHNMRTLGVMREDKRLRIAEETMDIYAPLAGRMGMQDMREELEELAFRYINPDAWRAVTDRLAELLEKNRGLLQKIETDLSEIFEKNGIKASVKSRQKKPWSVFRKMETKGLSFEQLSDIFGFRVMVDTVQDCYRALGLIHTTWSMVPGRFKDYISTPKQNDYRSIHTTIIGPSRQRIELQIRTREMDEIAEFGVAAHSIYKDRGSANNPHKISTETNAYAWLRQTIEQLSEGDNPEEFLEHTKLELFQDQVFCFTPKGRLIALPRGATPIDFAYAVHTDIGDSCVGAKVNGRIMPLMTELKNGDEVDIIRSKAQVPPAAWESLVATGKARAAIRRATRSAVRKQYSGLGMRILERAFERAGKPFSKDILKPGLPRLARKDVEDVLAAVGRGELPSTDVVKAVYPDYQDTRVTTQNNPAKAGEKGWFNIQNAAGMIFKVPEGGEGAAAKVDPAATTPKPGKRALPIRGTNPDLPVRFAPEGAVPGDRIVGILQPGAGITIYPIQSPALTAYDDQPERWIDVRWDIDDQMSERFPARISVSAINSPGSLAEIAQIAAANDANIHNLSMVRTAPDFTEMIIDVEVWDLKHLNRIISQLKESASVSSAKRVNG.

Positions 45 to 144 (YFSHPLEVAA…VKLADRLHNM (100 aa)) constitute an HD domain. Positions 390 to 451 (DQVFCFTPKG…KNGDEVDIIR (62 aa)) constitute a TGS domain. Residues 587-613 (AAKVDPAATTPKPGKRALPIRGTNPDL) form a disordered region. The ACT domain occupies 676-750 (RISVSAINSP…SVSSAKRVNG (75 aa)).

It belongs to the RelA/SpoT family.

The catalysed reaction is GTP + ATP = guanosine 3'-diphosphate 5'-triphosphate + AMP. Functions as a (p)ppGpp synthase. In eubacteria ppGpp (guanosine 3'-diphosphate 5'-diphosphate) is a mediator of the stringent response that coordinates a variety of cellular activities in response to changes in nutritional abundance. Plays a role in adaptation of Brucella to its intracellular host environment. In Brucella ovis (strain ATCC 25840 / 63/290 / NCTC 10512), this protein is GTP pyrophosphokinase rsh (rsh).